Here is a 129-residue protein sequence, read N- to C-terminus: Transcriptional activator protein (129 aa).

The span at 1–12 (MRSSSPSQPPSI) shows a compositional bias: low complexity. The interval 1–21 (MRSSSPSQPPSIKKAHRQAKR) is disordered. The Nuclear localization signal signature appears at 13-28 (KKAHRQAKRRAIRRRR). Residues 33 to 50 (CGCSIYFHIDCTGHGFTH) fold into a zinc finger. Residues 84–114 (IHQNEDIPCTNTVQPQPEESVASPQSLPELP) are disordered. The segment covering 92–109 (CTNTVQPQPEESVASPQS) has biased composition (polar residues). Positions 115 to 129 (SLDDFDDSFWVNLFK) are transactivation.

Belongs to the geminiviridae transcriptional activator protein family. In terms of assembly, monomer. Homodimer. Homooligomer. Self-interaction correlates with nuclear localization and efficient activation of transcription. Monomers suppress local silencing by interacting with and inactivating host adenosine kinase 2 (ADK2) in the cytoplasm. Interacts with and inhibits host SNF1 kinase. Binds to ssDNA. In terms of processing, phosphorylated.

The protein resides in the host nucleus. It localises to the host cytoplasm. Functionally, strong activator of the late viral genes promoters. Enhances the expression of the capsid protein and nuclear shuttle protein. Acts as a suppressor of RNA-mediated gene silencing, also known as post-transcriptional gene silencing (PTGS), a mechanism of plant viral defense that limits the accumulation of viral RNAs. Suppresses the host RNA silencing by inhibiting adenosine kinase 2 (ADK2), a kinase involved in a general methylation pathway. Also suppresses the host basal defense by interacting with and inhibiting SNF1 kinase, a key regulator of cell metabolism implicated in innate antiviral defense. Determines pathogenicity. In Abutilon (Upland cotton), this protein is Transcriptional activator protein.